We begin with the raw amino-acid sequence, 389 residues long: Phospho-N-acetylmuramoyl-pentapeptide-transferase (389 aa).

10 helical membrane-spanning segments follow: residues 25–45, 73–93, 97–117, 135–155, 190–210, 222–242, 259–279, 287–307, 311–331, and 366–386; these read RAVMATITALLIGLVCGPAVI, TMGGVLILLGIAVATLLWADL, FIWIVMLVTFGFGVIGWVDDY, FWQSVIGLFAAVYLAFSVSEA, ISYPLGVWGFIVLTYLVIVGA, GLVIMPVVLVGASLGVFAYVM, AGELLIFCSAMGGAGLAFLWF, FMGDVGALALGGALGTVAVIV, IVLFIMGGIFVAETLSVMLQV, and QVVVRFWIITLMLCLFGLSTL.

Belongs to the glycosyltransferase 4 family. MraY subfamily. Requires Mg(2+) as cofactor.

It is found in the cell inner membrane. The enzyme catalyses UDP-N-acetyl-alpha-D-muramoyl-L-alanyl-gamma-D-glutamyl-meso-2,6-diaminopimeloyl-D-alanyl-D-alanine + di-trans,octa-cis-undecaprenyl phosphate = di-trans,octa-cis-undecaprenyl diphospho-N-acetyl-alpha-D-muramoyl-L-alanyl-D-glutamyl-meso-2,6-diaminopimeloyl-D-alanyl-D-alanine + UMP. It participates in cell wall biogenesis; peptidoglycan biosynthesis. Functionally, catalyzes the initial step of the lipid cycle reactions in the biosynthesis of the cell wall peptidoglycan: transfers peptidoglycan precursor phospho-MurNAc-pentapeptide from UDP-MurNAc-pentapeptide onto the lipid carrier undecaprenyl phosphate, yielding undecaprenyl-pyrophosphoryl-MurNAc-pentapeptide, known as lipid I. The protein is Phospho-N-acetylmuramoyl-pentapeptide-transferase of Paraburkholderia xenovorans (strain LB400).